A 354-amino-acid chain; its full sequence is MTSPLITKAEVNSVFQGRSLLAEKDFTPAEINYLVDFGLHLKALKQQNIPHHYLEGKNIALLFAKTSTRTRAAFTTAAIDLGAHPEYLGANDIQLGIKESTEDTARVLGSMFDAIERRGFSQKEVEDLAKYSGVPVWNGLTDDWHPTQMIADFMTVKENFGYLKGLTLVYVGDGRNNMANSLIVTGSMLGVNVHIVAPDSLHPSKEVMDIANKFAEKSGAKPLATSNIEEGVKGANIIYSDVWVSMGESNWEERVKLLTPYRITMDMLKMTGNADNGKLIFMHCLPAFHDTETEYGKEIKEKYGLTEMEVTDEVFRSKYARQFEEAENRMHSIKAIMAATLGNLFIPAVPEDFK.

Carbamoyl phosphate contacts are provided by residues 67–70 (STRT), Gln94, Arg118, and 145–148 (HPTQ). L-ornithine contacts are provided by residues Asn177, Asp241, and 245–246 (SM). Residues 284–285 (CL) and Arg329 contribute to the carbamoyl phosphate site.

It belongs to the aspartate/ornithine carbamoyltransferase superfamily. OTCase family.

It localises to the cytoplasm. It carries out the reaction carbamoyl phosphate + L-ornithine = L-citrulline + phosphate + H(+). The protein operates within amino-acid degradation; L-arginine degradation via ADI pathway; carbamoyl phosphate from L-arginine: step 2/2. Its function is as follows. Reversibly catalyzes the transfer of the carbamoyl group from carbamoyl phosphate (CP) to the N(epsilon) atom of ornithine (ORN) to produce L-citrulline. The polypeptide is Ornithine carbamoyltransferase, catabolic (arcB) (Lactococcus lactis subsp. cremoris (strain MG1363)).